A 129-amino-acid polypeptide reads, in one-letter code: MSNIPAELRYAQSHEWARLEADGSVTVGISDHAQEALGDVVFIELPELGKTLAAGQEAGVVESVKAASDIYSPIGGEVIAINEALADTPEDVNNDPYVSWFFKLKPSNPAELDKLLDAAGYQAAVDAEG.

The Lipoyl-binding domain maps to serine 24–lysine 105. Lysine 65 bears the N6-lipoyllysine mark.

It belongs to the GcvH family. As to quaternary structure, the glycine cleavage system is composed of four proteins: P, T, L and H. The cofactor is (R)-lipoate.

In terms of biological role, the glycine cleavage system catalyzes the degradation of glycine. The H protein shuttles the methylamine group of glycine from the P protein to the T protein. In Pseudomonas aeruginosa (strain ATCC 15692 / DSM 22644 / CIP 104116 / JCM 14847 / LMG 12228 / 1C / PRS 101 / PAO1), this protein is Glycine cleavage system H protein 2.